The following is a 280-amino-acid chain: F420-dependent methylenetetrahydromethanopterin dehydrogenase (280 aa).

This sequence belongs to the MTD family.

The enzyme catalyses 5,10-methylenetetrahydromethanopterin + oxidized coenzyme F420-(gamma-L-Glu)(n) + 2 H(+) = 5,10-methenyl-5,6,7,8-tetrahydromethanopterin + reduced coenzyme F420-(gamma-L-Glu)(n). It functions in the pathway one-carbon metabolism; methanogenesis from CO(2); 5,10-methylene-5,6,7,8-tetrahydromethanopterin from 5,10-methenyl-5,6,7,8-tetrahydromethanopterin (coenzyme F420 route): step 1/1. Its function is as follows. Catalyzes the reversible reduction of methenyl-H(4)MPT(+) to methylene-H(4)MPT. This is F420-dependent methylenetetrahydromethanopterin dehydrogenase from Methanocorpusculum labreanum (strain ATCC 43576 / DSM 4855 / Z).